The sequence spans 300 residues: NAD kinase (300 aa).

D75 acts as the Proton acceptor in catalysis. NAD(+) contacts are provided by residues 75–76, 149–150, R177, D179, 190–195, A214, and Q248; these read DG, ND, and TAYALS.

It belongs to the NAD kinase family. The cofactor is a divalent metal cation.

It localises to the cytoplasm. The catalysed reaction is NAD(+) + ATP = ADP + NADP(+) + H(+). Functionally, involved in the regulation of the intracellular balance of NAD and NADP, and is a key enzyme in the biosynthesis of NADP. Catalyzes specifically the phosphorylation on 2'-hydroxyl of the adenosine moiety of NAD to yield NADP. This is NAD kinase from Burkholderia vietnamiensis (strain G4 / LMG 22486) (Burkholderia cepacia (strain R1808)).